Reading from the N-terminus, the 395-residue chain is Elongation factor Tu (395 aa).

One can recognise a tr-type G domain in the interval 10–204 (KPHVNIGTIG…AVDNYIPHPV (195 aa)). The tract at residues 19–26 (GHVDHGKT) is G1. 19–26 (GHVDHGKT) is a GTP binding site. Threonine 26 is a Mg(2+) binding site. The segment at 60 to 64 (GITIS) is G2. Residues 81–84 (DCPG) are G3. Residues 81–85 (DCPGH) and 136–139 (NKVD) contribute to the GTP site. The tract at residues 136–139 (NKVD) is G4. The segment at 174–176 (SAL) is G5.

The protein belongs to the TRAFAC class translation factor GTPase superfamily. Classic translation factor GTPase family. EF-Tu/EF-1A subfamily. Monomer.

Its subcellular location is the cytoplasm. It carries out the reaction GTP + H2O = GDP + phosphate + H(+). Its function is as follows. GTP hydrolase that promotes the GTP-dependent binding of aminoacyl-tRNA to the A-site of ribosomes during protein biosynthesis. This chain is Elongation factor Tu, found in Rickettsia akari (strain Hartford).